The chain runs to 777 residues: Reticulon-1 (777 aa).

Disordered regions lie at residues 1 to 77 (MAAP…ETAS), 129 to 182 (NGHI…ILAD), 198 to 245 (TRPQ…PVEG), and 293 to 573 (ATHE…IPGP). S13 and S68 each carry phosphoserine. Positions 199–233 (RPQEAKGQEEQSPGLEDKDLDFKDKDSEVSTKPEG) are enriched in basic and acidic residues. 3 positions are modified to phosphoserine: S210, S241, and S325. Positions 326-339 (PGSVTPPSSGTEPS) are enriched in low complexity. S348 and S350 each carry phosphoserine. The segment covering 393–406 (IPSSLDQEASSAES) has biased composition (polar residues). S485 is subject to Phosphoserine. Residues 495–510 (AIREETSSRATEERAP) show a composition bias toward basic and acidic residues. The segment covering 525–534 (TPVTLQSRPE) has biased composition (polar residues). In terms of domain architecture, Reticulon spans 590–777 (AIDLLYWRDI…KIPGAKRHAE (188 aa)). 2 helical membrane passes run 604–624 (IVFGSFLLLLFSLTQFSVVSV) and 706–726 (FAVLMWLLTYVGALFNGLTLL).

As to quaternary structure, interacts with NDRG1. Interacts with BACE1. Interacts with TMEM33. Interacts with UGCG; regulates the ceramide glucosyltransferase activity of UGCG. As to expression, expressed predominantly in central and peripheral nervous system of newborn and adult rats. Low levels have been also detected in heart, adrenal gland and spleen. Expression of isoform RTN1-B is restricted to particular neuronal types.

The protein localises to the endoplasmic reticulum membrane. It is found in the golgi apparatus membrane. Functionally, inhibits amyloid precursor protein processing, probably by blocking BACE1 activity. The chain is Reticulon-1 (Rtn1) from Rattus norvegicus (Rat).